A 204-amino-acid polypeptide reads, in one-letter code: Recombination protein RecR (204 aa).

The C4-type zinc-finger motif lies at 58-75 (CSVCQNITDLGVDPCHIC). Positions 83–181 (SVICVVESPT…NVTRIARGIP (99 aa)) constitute a Toprim domain.

The protein belongs to the RecR family.

In terms of biological role, may play a role in DNA repair. It seems to be involved in an RecBC-independent recombinational process of DNA repair. It may act with RecF and RecO. The protein is Recombination protein RecR of Chlorobaculum tepidum (strain ATCC 49652 / DSM 12025 / NBRC 103806 / TLS) (Chlorobium tepidum).